Here is a 137-residue protein sequence, read N- to C-terminus: MKVSPRRRARECAVQALYSWYVSQNSVEEVELSFVTDQDMNGVDLPYFRKLLRGTVLYVEAIDNDLRPFLDRAEDEVDPIERTILRLSAYELKYELDVPYKVVINEGIEVAKVFGSDDSHKYINGILDKLAPALGRK.

This sequence belongs to the NusB family.

Involved in transcription antitermination. Required for transcription of ribosomal RNA (rRNA) genes. Binds specifically to the boxA antiterminator sequence of the ribosomal RNA (rrn) operons. In Actinobacillus pleuropneumoniae serotype 5b (strain L20), this protein is Transcription antitermination protein NusB.